Consider the following 739-residue polypeptide: Catalase-peroxidase (739 aa).

The interval 1–20 (MGSNECPYSRQNANIGGGGQ) is disordered. The segment at residues 94-217 (WHSAGTYRVF…LAASHMGLIY (124 aa)) is a cross-link (tryptophyl-tyrosyl-methioninium (Trp-Tyr) (with M-243)). His95 serves as the catalytic Proton acceptor. The tryptophyl-tyrosyl-methioninium (Tyr-Met) (with W-94) cross-link spans 217-243 (YVNPEGPNKNPDPVLAAKDIRITFGRM). His258 provides a ligand contact to heme b.

This sequence belongs to the peroxidase family. Peroxidase/catalase subfamily. Homodimer or homotetramer. Heme b is required as a cofactor. Formation of the three residue Trp-Tyr-Met cross-link is important for the catalase, but not the peroxidase activity of the enzyme.

It is found in the cytoplasm. The catalysed reaction is H2O2 + AH2 = A + 2 H2O. It catalyses the reaction 2 H2O2 = O2 + 2 H2O. Its function is as follows. Bifunctional enzyme with both catalase and broad-spectrum peroxidase activity. The chain is Catalase-peroxidase from Emericella nidulans (strain FGSC A4 / ATCC 38163 / CBS 112.46 / NRRL 194 / M139) (Aspergillus nidulans).